Here is a 189-residue protein sequence, read N- to C-terminus: UPF0301 protein bbp_491 (189 aa).

The protein belongs to the UPF0301 (AlgH) family.

The chain is UPF0301 protein bbp_491 from Buchnera aphidicola subsp. Baizongia pistaciae (strain Bp).